The sequence spans 338 residues: tRNA N6-adenosine threonylcarbamoyltransferase (338 aa).

The Fe cation site is built by His111 and His115. Substrate-binding positions include 134 to 138, Asp167, Gly180, and Asn272; that span reads LVSGG. Asp300 lines the Fe cation pocket.

This sequence belongs to the KAE1 / TsaD family. Fe(2+) is required as a cofactor.

It is found in the cytoplasm. The catalysed reaction is L-threonylcarbamoyladenylate + adenosine(37) in tRNA = N(6)-L-threonylcarbamoyladenosine(37) in tRNA + AMP + H(+). Required for the formation of a threonylcarbamoyl group on adenosine at position 37 (t(6)A37) in tRNAs that read codons beginning with adenine. Is involved in the transfer of the threonylcarbamoyl moiety of threonylcarbamoyl-AMP (TC-AMP) to the N6 group of A37, together with TsaE and TsaB. TsaD likely plays a direct catalytic role in this reaction. The protein is tRNA N6-adenosine threonylcarbamoyltransferase of Shewanella baltica (strain OS155 / ATCC BAA-1091).